A 206-amino-acid polypeptide reads, in one-letter code: LexA repressor (206 aa).

Residues 28 to 48 (RAEIARRLGFKSANAAEEHLK) constitute a DNA-binding region (H-T-H motif). Catalysis depends on for autocatalytic cleavage activity residues Ser123 and Lys160.

It belongs to the peptidase S24 family. As to quaternary structure, homodimer.

It carries out the reaction Hydrolysis of Ala-|-Gly bond in repressor LexA.. Functionally, represses a number of genes involved in the response to DNA damage (SOS response), including recA and lexA. In the presence of single-stranded DNA, RecA interacts with LexA causing an autocatalytic cleavage which disrupts the DNA-binding part of LexA, leading to derepression of the SOS regulon and eventually DNA repair. This chain is LexA repressor, found in Shewanella piezotolerans (strain WP3 / JCM 13877).